Here is a 52-residue protein sequence, read N- to C-terminus: Phospholamban (52 aa).

N-acetylmethionine is present on Met1. Residues 1-31 (MDKVQYLTRSAIRRASTIEMPQQARQNLQNL) lie on the Cytoplasmic side of the membrane. Ser16 carries the post-translational modification Phosphoserine; by PKA and DMPK. The residue at position 17 (Thr17) is a Phosphothreonine; by CaMK2. The helical transmembrane segment at 32–52 (FINFCLILICLLLICIIVMLL) threads the bilayer. The S-palmitoyl cysteine moiety is linked to residue Cys36.

The protein belongs to the phospholamban family. Homopentamer. Can also form heterooligomers with other sarcoplasmic/endoplasmic reticulum calcium ATPase (SERCA) regulators ARLN, ERLN, SLN and STRIT1/DWORF. Monomer. Interacts with HAX1. Interacts as a monomer with ATP2A2; the interaction decreases ATP2A2 Ca(2+) affinity. Interacts with VMP1; VMP1 competes with PLN and SLN to prevent them from forming an inhibitory complex with ATP2A2. Interacts with S100A1 in a Ca(2+)-dependent manner. Phosphorylation by DMPK may stimulate sarcoplasmic reticulum calcium uptake in cardiomyocytes. Phosphorylation by PKA abolishes the inhibition of ATP2A2-mediated calcium uptake. Phosphorylated at Thr-17 by CaMK2, and in response to beta-adrenergic stimulation. Post-translationally, palmitoylated by ZDHHC16, promoting formation of the homopentamer. In terms of processing, in elongated spermatids, proteolytically cleaved by SPPL2C which modulates intracellular Ca(2+) homeostasis. As to expression, heart.

It is found in the endoplasmic reticulum membrane. The protein resides in the sarcoplasmic reticulum membrane. It localises to the mitochondrion membrane. Its subcellular location is the membrane. Reversibly inhibits the activity of ATP2A2/SERCA2 in cardiac sarcoplasmic reticulum by decreasing the apparent affinity of the ATPase for Ca(2+). Binds preferentially to the ATP-bound E1 conformational form of ATP2A2 which predominates at low Ca(2+) concentrations during the diastolic phase of the cardiac cycle. Inhibits ATP2A2 Ca(2+) affinity by disrupting its allosteric activation by ATP. Modulates the contractility of the heart muscle in response to physiological stimuli via its effects on ATP2A2. Modulates calcium re-uptake during muscle relaxation and plays an important role in calcium homeostasis in the heart muscle. The degree of ATP2A2 inhibition depends on the oligomeric state of PLN. ATP2A2 inhibition is alleviated by PLN phosphorylation. Also inhibits the activity of ATP2A3/SERCA3. Controls intracellular Ca(2+) levels in elongated spermatids and may play a role in germ cell differentiation. In the thalamic reticular nucleus of the brain, plays a role in the regulation of sleep patterns and executive functioning. In Canis lupus familiaris (Dog), this protein is Phospholamban.